A 77-amino-acid chain; its full sequence is Putative sulfur carrier protein AF_0188 (77 aa).

The Cysteine persulfide intermediate role is filled by Cys11.

This sequence belongs to the sulfur carrier protein TusA family.

In Archaeoglobus fulgidus (strain ATCC 49558 / DSM 4304 / JCM 9628 / NBRC 100126 / VC-16), this protein is Putative sulfur carrier protein AF_0188.